Consider the following 367-residue polypeptide: Glutamate 5-kinase (367 aa).

Lys-10 contributes to the ATP binding site. 3 residues coordinate substrate: Ser-50, Asp-137, and Asn-149. ATP contacts are provided by residues 169 to 170 (TD) and 211 to 217 (TGGMETK). The region spanning 275–353 (AGDITVDDGA…QDISDILGYE (79 aa)) is the PUA domain.

This sequence belongs to the glutamate 5-kinase family.

The protein resides in the cytoplasm. The catalysed reaction is L-glutamate + ATP = L-glutamyl 5-phosphate + ADP. Its pathway is amino-acid biosynthesis; L-proline biosynthesis; L-glutamate 5-semialdehyde from L-glutamate: step 1/2. Its function is as follows. Catalyzes the transfer of a phosphate group to glutamate to form L-glutamate 5-phosphate. The polypeptide is Glutamate 5-kinase (Sodalis glossinidius (strain morsitans)).